The primary structure comprises 420 residues: Glutamyl-tRNA reductase (420 aa).

Residues 49–52, serine 109, 114–116, and glutamine 120 contribute to the substrate site; these read TCNR and EPQ. Residue cysteine 50 is the Nucleophile of the active site. 189–194 is a binding site for NADP(+); that stretch reads GAGETI.

The protein belongs to the glutamyl-tRNA reductase family. Homodimer.

It catalyses the reaction (S)-4-amino-5-oxopentanoate + tRNA(Glu) + NADP(+) = L-glutamyl-tRNA(Glu) + NADPH + H(+). The protein operates within porphyrin-containing compound metabolism; protoporphyrin-IX biosynthesis; 5-aminolevulinate from L-glutamyl-tRNA(Glu): step 1/2. Functionally, catalyzes the NADPH-dependent reduction of glutamyl-tRNA(Glu) to glutamate 1-semialdehyde (GSA). The sequence is that of Glutamyl-tRNA reductase from Edwardsiella ictaluri (strain 93-146).